The chain runs to 602 residues: Translation factor GUF1 homolog, organellar chromatophore (602 aa).

The tr-type G domain maps to 7–189; that stretch reads SRIRNFCIIA…AIVERIPPPV (183 aa). GTP is bound by residues 16-23, 82-86, and 136-139; these read AHIDHGKS, DTPGH, and NKID.

Belongs to the TRAFAC class translation factor GTPase superfamily. Classic translation factor GTPase family. LepA subfamily.

It is found in the plastid. The protein resides in the organellar chromatophore. It carries out the reaction GTP + H2O = GDP + phosphate + H(+). Functionally, promotes protein synthesis. May act as a fidelity factor of the translation reaction, by catalyzing a one-codon backward translocation of tRNAs on improperly translocated ribosomes. This is Translation factor GUF1 homolog, organellar chromatophore from Paulinella chromatophora.